Here is a 227-residue protein sequence, read N- to C-terminus: Chalcone--flavanone isomerase 2-B (227 aa).

Residues Thr50, Asn115, and Thr193 each contribute to the substrate site.

It belongs to the chalcone isomerase family.

It catalyses the reaction a chalcone = a flavanone.. It participates in secondary metabolite biosynthesis; flavonoid biosynthesis. Its function is as follows. Catalyzes the intramolecular cyclization of bicyclic chalcones into tricyclic (S)-flavanones. Responsible for the isomerization of 4,2',4',6'-tetrahydroxychalcone (also termed chalcone) into naringenin. The chain is Chalcone--flavanone isomerase 2-B (CHI2-B) from Glycine max (Soybean).